The following is a 229-amino-acid chain: Bcl-2-like protein 1 (229 aa).

A BH4 motif is present at residues 4 to 24 (SNRELVIDFVSYKLSQRGHCW). A BH3 motif is present at residues 82–96 (VRQALRDAGDEFELR). Positions 125–144 (ELFHDGVNWGRIVAFFSFGG) match the BH1 motif. Residues 176 to 191 (PWIQENGGWERFVDLY) carry the BH2 motif. A helical membrane pass occupies residues 206 to 223 (FNKWLLTGATVAGVLLLG).

This sequence belongs to the Bcl-2 family. As to expression, highest expression in organs with lymphoid development.

It localises to the mitochondrion membrane. The protein resides in the nucleus membrane. It is found in the mitochondrion matrix. Its subcellular location is the cytoplasm. The protein localises to the cytoskeleton. It localises to the microtubule organizing center. The protein resides in the centrosome. It is found in the cytosol. Its subcellular location is the cytoplasmic vesicle. The protein localises to the secretory vesicle. It localises to the synaptic vesicle membrane. Its function is as follows. Dominant regulator of apoptotic cell death. The long form displays cell death repressor activity, whereas the short isoform promotes apoptosis. Also acts as a regulator of G2 checkpoint and progression to cytokinesis during mitosis. This is Bcl-2-like protein 1 (BCL2L1) from Gallus gallus (Chicken).